The chain runs to 1357 residues: DNA-directed RNA polymerase subunit beta (1357 aa).

Belongs to the RNA polymerase beta chain family. In terms of assembly, the RNAP catalytic core consists of 2 alpha, 1 beta, 1 beta' and 1 omega subunit. When a sigma factor is associated with the core the holoenzyme is formed, which can initiate transcription.

The enzyme catalyses RNA(n) + a ribonucleoside 5'-triphosphate = RNA(n+1) + diphosphate. In terms of biological role, DNA-dependent RNA polymerase catalyzes the transcription of DNA into RNA using the four ribonucleoside triphosphates as substrates. The chain is DNA-directed RNA polymerase subunit beta from Pseudomonas fluorescens (strain Pf0-1).